A 44-amino-acid polypeptide reads, in one-letter code: Photosystem II reaction center protein K (44 aa).

A propeptide spanning residues 1–7 is cleaved from the precursor; that stretch reads METLLLS. The helical transmembrane segment at 23-43 threads the bilayer; that stretch reads LPIIPVFFLLLAFVWQAAIGF.

Belongs to the PsbK family. PSII is composed of 1 copy each of membrane proteins PsbA, PsbB, PsbC, PsbD, PsbE, PsbF, PsbH, PsbI, PsbJ, PsbK, PsbL, PsbM, PsbT, PsbX, PsbY, PsbZ, Psb30/Ycf12, at least 3 peripheral proteins of the oxygen-evolving complex and a large number of cofactors. It forms dimeric complexes.

It is found in the plastid. The protein resides in the chloroplast thylakoid membrane. Functionally, one of the components of the core complex of photosystem II (PSII). PSII is a light-driven water:plastoquinone oxidoreductase that uses light energy to abstract electrons from H(2)O, generating O(2) and a proton gradient subsequently used for ATP formation. It consists of a core antenna complex that captures photons, and an electron transfer chain that converts photonic excitation into a charge separation. The sequence is that of Photosystem II reaction center protein K from Phaeodactylum tricornutum (strain CCAP 1055/1).